Here is a 967-residue protein sequence, read N- to C-terminus: Leucine--tRNA ligase (967 aa).

The 'HIGH' region motif lies at 43–53; that stretch reads PYLSGHLHVGH. Positions 650–654 match the 'KMSKS' region motif; sequence KMSKS. Lysine 653 is a binding site for ATP.

The protein belongs to the class-I aminoacyl-tRNA synthetase family.

It localises to the cytoplasm. The catalysed reaction is tRNA(Leu) + L-leucine + ATP = L-leucyl-tRNA(Leu) + AMP + diphosphate. The polypeptide is Leucine--tRNA ligase (Pyrococcus horikoshii (strain ATCC 700860 / DSM 12428 / JCM 9974 / NBRC 100139 / OT-3)).